We begin with the raw amino-acid sequence, 389 residues long: MDLFEYQAKELFAKHEVPTSAGRVTDTVAGAREIAEEIGKPVMVKAQVKVGGRGKAGGVKYSADADAAQANAEAILGLDIKGHVVKKLLVAEASDIAEEYYISFLLDRTNRTYLAMCSVEGGVEIEVTAEENPDALAKIPVDAVKGVDLAFARSIAEAGKLPAEVLDAAAVTIQKLWEVFINEDALLVEVNPLVRTPDDQILALDGKVTLDENAAFRQPGHEAFEDKDATDPLELKAKENDLNYVKLDGEVGIIGNGAGLVMSTLDVVAYAGEKHGGVKPANFLDIGGGASAEVMANGLDVILNDAQVKSVFVNVFGGITACDAVANGIVGALKTLGDEANKPLVVRLDGNNVEEGRRILAEAAHPLVTVVGTMDEAADKAAELAFAAK.

In terms of domain architecture, ATP-grasp spans 9–236; sequence KELFAKHEVP…KDATDPLELK (228 aa). Residues Lys45, 52–54, Ser94, and Glu99 contribute to the ATP site; that span reads GRG. 2 residues coordinate Mg(2+): Asn191 and Asp205. Residues Asn256 and 318 to 320 contribute to the substrate site; that span reads GIT.

The protein belongs to the succinate/malate CoA ligase beta subunit family. Heterotetramer of two alpha and two beta subunits. Mg(2+) is required as a cofactor.

The enzyme catalyses succinate + ATP + CoA = succinyl-CoA + ADP + phosphate. It catalyses the reaction GTP + succinate + CoA = succinyl-CoA + GDP + phosphate. It participates in carbohydrate metabolism; tricarboxylic acid cycle; succinate from succinyl-CoA (ligase route): step 1/1. Its function is as follows. Succinyl-CoA synthetase functions in the citric acid cycle (TCA), coupling the hydrolysis of succinyl-CoA to the synthesis of either ATP or GTP and thus represents the only step of substrate-level phosphorylation in the TCA. The beta subunit provides nucleotide specificity of the enzyme and binds the substrate succinate, while the binding sites for coenzyme A and phosphate are found in the alpha subunit. This chain is Succinate--CoA ligase [ADP-forming] subunit beta, found in Rhodococcus jostii (strain RHA1).